Reading from the N-terminus, the 1253-residue chain is Myosin-1 (1253 aa).

The segment at 1 to 40 (MGHSRRPVGGEKKSRGFGRSKAAADVGDGRQAGKPQVKKA) is disordered. One can recognise a Myosin motor domain in the interval 50 to 729 (IGVSDLTLLS…TLFALEAMRD (680 aa)). 143–150 (GESGAGKT) is an ATP binding site. Phosphoserine is present on S371. An actin-binding region spans residues 418-500 (SIGILDIYGF…PGVFAALNDA (83 aa)). IQ domains lie at 733–753 (HNMA…RIEC) and 754–779 (ATRI…QGHQ). The TH1 domain occupies 787–977 (RRRMSLLGSR…TIHTGAGEPA (191 aa)). Disordered stretches follow at residues 959–1083 (TGDD…PKKP) and 1139–1253 (QVAP…DDDW). Low complexity predominate over residues 1029-1055 (PQPAAAQPAAPQPAARVVPQPVAAVAA). Composition is skewed to pro residues over residues 1068–1081 (APPP…PAPK) and 1143–1155 (APKP…PPAA). One can recognise an SH3 domain in the interval 1080–1141 (PKKPTAKALY…PEAYLEEQVA (62 aa)). Composition is skewed to low complexity over residues 1156 to 1173 (PRST…AKAK) and 1221 to 1235 (NSAS…LAEA).

It belongs to the TRAFAC class myosin-kinesin ATPase superfamily. Myosin family. Post-translationally, phosphorylation of the TEDS site (Ser-371) is required for the polarization of the actin cytoskeleton. Phosphorylation probably activates the myosin-I ATPase activity.

It localises to the cytoplasm. Its subcellular location is the cytoskeleton. It is found in the actin patch. Type-I myosin implicated in the organization of the actin cytoskeleton. Required for proper actin cytoskeleton polarization. At the cell cortex, assembles in patch-like structures together with proteins from the actin-polymerizing machinery and promotes actin assembly. Functions as actin nucleation-promoting factor (NPF) for the Arp2/3 complex. Plays an important role in polarized growth, spore germination, hyphal morphogenesis, and septal wall formation. This Aspergillus clavatus (strain ATCC 1007 / CBS 513.65 / DSM 816 / NCTC 3887 / NRRL 1 / QM 1276 / 107) protein is Myosin-1 (myoA).